We begin with the raw amino-acid sequence, 292 residues long: Protein PHR1-LIKE 3 (292 aa).

Residues 34 to 94 form the HTH myb-type domain; sequence TDPKPRLRWT…HLQKFRLGRQ (61 aa). Residues 65-90 constitute a DNA-binding region (H-T-H motif); sequence PKTIMRTMGVKGLTLYHLKSHLQKFR. Positions 137-157 form a coiled coil; sequence TEALRAQMEVQRRLHEQLEVQ. The LHEQLE signature appears at 150–155; that stretch reads LHEQLE.

The protein belongs to the MYB-CC family. Homo- and heterodimers. Interacts with PHL2, but not with PHR1.

It is found in the nucleus. In terms of biological role, transcriptional activator. Probable component of the central regulatory system controlling transcriptional responses to Pi starvation. Binds in a sequence-specific manner to phosphate starvation-regulated promoters. Required for female gametophyte development and function. This chain is Protein PHR1-LIKE 3, found in Arabidopsis thaliana (Mouse-ear cress).